Here is a 204-residue protein sequence, read N- to C-terminus: UPF0637 protein lin1053 (204 aa).

This sequence belongs to the UPF0637 family.

The protein is UPF0637 protein lin1053 of Listeria innocua serovar 6a (strain ATCC BAA-680 / CLIP 11262).